The chain runs to 336 residues: MLVLGIETSCDETSAAIVEDGRKILSNVIYSQIDIHYQFGGVVPEIASRKHVEKISYVVDMAFKQAGLTIDDIDGIAATYGPGLVGSLLVGLSFAKALSYAKRLPFVAVNHIEGHIYANFITYPQLTPPLIVLVVSGGHTNLIILKDFEEYEVVGKTRDDAAGEAFDKIARYLGLGYPGGPAIDKIAKQGDEDKYKYPVADVGGYNFSFSGLKSAVINHVHGLWQRGEEFKIEDVAASFQKTVVSILVEKTINLSLETNIRKIAVAGGVAANSKLRSEFYKKCAEHNIEFFVPEFKYCTDNAAMIASCGYFKLQKGIVSSYRENAVPYINLVSKKS.

Residues His-111 and His-115 each contribute to the Fe cation site. Substrate-binding positions include 134–138 (VVSGG), Asp-167, Gly-180, Asp-184, and Asn-272. Asp-300 provides a ligand contact to Fe cation.

It belongs to the KAE1 / TsaD family. Fe(2+) serves as cofactor.

Its subcellular location is the cytoplasm. The catalysed reaction is L-threonylcarbamoyladenylate + adenosine(37) in tRNA = N(6)-L-threonylcarbamoyladenosine(37) in tRNA + AMP + H(+). In terms of biological role, required for the formation of a threonylcarbamoyl group on adenosine at position 37 (t(6)A37) in tRNAs that read codons beginning with adenine. Is involved in the transfer of the threonylcarbamoyl moiety of threonylcarbamoyl-AMP (TC-AMP) to the N6 group of A37, together with TsaE and TsaB. TsaD likely plays a direct catalytic role in this reaction. The sequence is that of tRNA N6-adenosine threonylcarbamoyltransferase from Caldicellulosiruptor bescii (strain ATCC BAA-1888 / DSM 6725 / KCTC 15123 / Z-1320) (Anaerocellum thermophilum).